Consider the following 171-residue polypeptide: MDYKQYITIVEDWPQEGIRFKDITTLMQNGTAYKRAVEELAVYAKEKQADVIVGPEARGFVVGCPIATELEIGFVPVRKKGKLPREVIEANYGLEYGKDCLTIHKDSIQPGQRVVITDDLLATGGTIEATAKMVEQLGGKVVGIAFLIELAYIGGRDKLKQYDLFSLMSYE.

Belongs to the purine/pyrimidine phosphoribosyltransferase family. Homodimer.

Its subcellular location is the cytoplasm. It catalyses the reaction AMP + diphosphate = 5-phospho-alpha-D-ribose 1-diphosphate + adenine. Its pathway is purine metabolism; AMP biosynthesis via salvage pathway; AMP from adenine: step 1/1. Its function is as follows. Catalyzes a salvage reaction resulting in the formation of AMP, that is energically less costly than de novo synthesis. The polypeptide is Adenine phosphoribosyltransferase (Shouchella clausii (strain KSM-K16) (Alkalihalobacillus clausii)).